Consider the following 644-residue polypeptide: Chaperone protein HtpG (644 aa).

The tract at residues 1 to 352 (MNARVEQLEF…AQDMSLNVSR (352 aa)) is a; substrate-binding. Residues 353–566 (EILQQDRQIK…AFGITPALAR (214 aa)) form a b region. Positions 567 to 644 (LYRASGQDIP…ILADRLARTL (78 aa)) are c.

The protein belongs to the heat shock protein 90 family. In terms of assembly, homodimer.

The protein localises to the cytoplasm. Molecular chaperone. Has ATPase activity. This Mycolicibacterium paratuberculosis (strain ATCC BAA-968 / K-10) (Mycobacterium paratuberculosis) protein is Chaperone protein HtpG.